The primary structure comprises 97 residues: Down syndrome critical region protein 8 (97 aa).

In terms of tissue distribution, expressed in numerous tissues; not found in breast, heart, small intestine and liver. Isoform 1: Predominantly expressed in the testis. Isoform 3: Predominantly expressed in the testis, at lower level in the placenta, during malignant progression of melanocytic tumors and in several tumors of varying origins. Isoform 4: Predominantly expressed in the testis, at lower level in the placenta, during malignant progression of melanocytic tumors and in several tumors of varying origins. Isoform 5: Predominantly expressed in the testis. Isoform 6: Predominantly expressed in the testis.

This chain is Down syndrome critical region protein 8, found in Homo sapiens (Human).